A 442-amino-acid chain; its full sequence is MHLAVVGLSHRTAPVEVRERLSIPEHHLETSLQSLRSHEQVLETSILSTCNRLEIYSLLRHPEDGVEAIRDFLANHSGLADPDLQPHLFALHHEEAIQHLLRVSAGLDSLVLGEGQILSQVKKMYRLGQDHKSIGPILNRLLNQAVSTGKRVRSETNLGSGAVSISSAAVELAQLKVGQEQGVDDLVSLSQEKVAVVGAGRMARLLLQHLQSKGARSITVVNRTVAKAEVLAKDFPDLVITCCGLDQLDAQLASNTLLFTSTGADEPIIDRQRLDAITRQARLMLVDIGVPRNISSDAADVSGTLSYDVDDLQEVVERNVAARQQLAQQAEVLLDEDRQAFLDWWDGLEAVPTINRMRQQFEEIRKQELLKALSRMGSDFSQREKQVVEALTKGLINKILHGPTTALRAPQPRQQRLDSMAAAQRLFDLPGDDADRDRSDAK.

Substrate contacts are provided by residues 49 to 52 (TCNR), Ser109, 114 to 116 (EGQ), and Gln120. Cys50 serves as the catalytic Nucleophile. Position 198–203 (198–203 (GAGRMA)) interacts with NADP(+). The disordered stretch occupies residues 420-442 (MAAAQRLFDLPGDDADRDRSDAK). A compositionally biased stretch (basic and acidic residues) spans 433–442 (DADRDRSDAK).

This sequence belongs to the glutamyl-tRNA reductase family. As to quaternary structure, homodimer.

The enzyme catalyses (S)-4-amino-5-oxopentanoate + tRNA(Glu) + NADP(+) = L-glutamyl-tRNA(Glu) + NADPH + H(+). The protein operates within porphyrin-containing compound metabolism; protoporphyrin-IX biosynthesis; 5-aminolevulinate from L-glutamyl-tRNA(Glu): step 1/2. Its pathway is porphyrin-containing compound metabolism; chlorophyll biosynthesis. In terms of biological role, catalyzes the NADPH-dependent reduction of glutamyl-tRNA(Glu) to glutamate 1-semialdehyde (GSA). The sequence is that of Glutamyl-tRNA reductase from Synechococcus sp. (strain RCC307).